The following is a 238-amino-acid chain: MRPSKRQFDEMRAISFERGVSKHAEGSCLVKFGDTHVLCTASLEEKVPGWMRNSGKGWVTAEYGMLPRSTGERMRREASAGKQGGRTLEIQRLIGRSLRAVVDLQALGEQQITVDCDVIQADGGTRTASITGGWVALYDCLRWMEARQMASVSKVLKDHVAAISCGIHDGQPVIDLDYLEDSAAGTDANFVMTGKGGIVEIQGTAEGEPFSEDQFAELMGLAKKGIQRLVSLQQMAVA.

Phosphate contacts are provided by residues Arg86 and 124–126 (GTR).

Belongs to the RNase PH family. Homohexameric ring arranged as a trimer of dimers.

It catalyses the reaction tRNA(n+1) + phosphate = tRNA(n) + a ribonucleoside 5'-diphosphate. Its function is as follows. Phosphorolytic 3'-5' exoribonuclease that plays an important role in tRNA 3'-end maturation. Removes nucleotide residues following the 3'-CCA terminus of tRNAs; can also add nucleotides to the ends of RNA molecules by using nucleoside diphosphates as substrates, but this may not be physiologically important. Probably plays a role in initiation of 16S rRNA degradation (leading to ribosome degradation) during starvation. In Mesorhizobium japonicum (strain LMG 29417 / CECT 9101 / MAFF 303099) (Mesorhizobium loti (strain MAFF 303099)), this protein is Ribonuclease PH.